The chain runs to 277 residues: Putative phosphoenolpyruvate synthase regulatory protein (277 aa).

An ADP-binding site is contributed by 157 to 164; it reads GVSRCGKT.

This sequence belongs to the pyruvate, phosphate/water dikinase regulatory protein family. PSRP subfamily.

The catalysed reaction is [pyruvate, water dikinase] + ADP = [pyruvate, water dikinase]-phosphate + AMP + H(+). The enzyme catalyses [pyruvate, water dikinase]-phosphate + phosphate + H(+) = [pyruvate, water dikinase] + diphosphate. In terms of biological role, bifunctional serine/threonine kinase and phosphorylase involved in the regulation of the phosphoenolpyruvate synthase (PEPS) by catalyzing its phosphorylation/dephosphorylation. The polypeptide is Putative phosphoenolpyruvate synthase regulatory protein (Klebsiella pneumoniae (strain 342)).